The primary structure comprises 533 residues: MVFSRDIPSPASMFSTYASMMGYVMIIKPMINTIIPRPVQNFVFSYLKSFAGSRSSTLTLTIDQMSSMYIPDELYAAAQAYLSTKISPNSVRLIMARDPAEKKVKLYLSDGEVVSDVYNGIKLKWRFLARNKNNTMVEEYGQSYQGNIQRESLELSFDKKHRDLVVNSYIPYVESKAKEVNNKRRILKMHCYSHMAQTWQSVNFKHPSTFDTMAMNDDLKRSMIEDLDRFVGRKDFYKRVGKAWKRGYLLYGPPGTGKSSLVAAMANYLKFDIYDLQLASVQGDAHLRSLLLATNNSSILLIEDIDCSVDLPTRLQPPTETSQPLGAVQVSKPLTLSGLLNCIDGLWSSCGNERIIIFTTNNKEKLDPALLRPGRMDMHIYMGHCSFQGFKTLASNYLGLSDENDDTHPLCPDIKHLIDGHVLTPAQVAEELMKDEDADAALEGLVKVLKRKRLEPKKCDDESKMKKLKEGEEAIADAELAVLTPAQVEDKEELVASEYANVMPEWLPRSRLVMVLPGFHRARGIRRGLGDEM.

A helical membrane pass occupies residues 11-27 (ASMFSTYASMMGYVMII). 252–259 (GPPGTGKS) lines the ATP pocket.

Belongs to the AAA ATPase family. BCS1 subfamily. Requires Mg(2+) as cofactor.

Its subcellular location is the membrane. It carries out the reaction ATP + H2O = ADP + phosphate + H(+). The polypeptide is AAA-ATPase At5g17740 (Arabidopsis thaliana (Mouse-ear cress)).